The sequence spans 325 residues: MTADNGHDNNRHQYTAHVPVLLDEVLHYLSPVRGGRYLDGTLGLGGHSEAIMNRCGGDAWLLGLDRDREALAAASGRLAPFGDRVTTRYACYSQFAAIMDEIGWTGLDGALIDIGVSSMQIDTPSRGFSFYADGPLDMRMDPSGDMPSAGVLVNTGSVERLKEIISTYGEDPMAGRIARAIVDARARNPIETTARLAEVVESAYPAKWRAKSRNHPATRTFQALRMAVNGELEELETFLAAIVDRMNPGGRIVVITFHSLEDRLVKNAFRDEAKGCLCPRHIPVCVCGKKPRVNVLTRKPVTAGQAELQANSRASSAKLRAAERI.

S-adenosyl-L-methionine-binding positions include 45–47 (GGH), Asp65, Tyr92, Asp113, and Gln120.

Belongs to the methyltransferase superfamily. RsmH family.

It is found in the cytoplasm. It carries out the reaction cytidine(1402) in 16S rRNA + S-adenosyl-L-methionine = N(4)-methylcytidine(1402) in 16S rRNA + S-adenosyl-L-homocysteine + H(+). In terms of biological role, specifically methylates the N4 position of cytidine in position 1402 (C1402) of 16S rRNA. The polypeptide is Ribosomal RNA small subunit methyltransferase H (Oleidesulfovibrio alaskensis (strain ATCC BAA-1058 / DSM 17464 / G20) (Desulfovibrio alaskensis)).